We begin with the raw amino-acid sequence, 146 residues long: Angiogenin (146 aa).

An N-terminal signal peptide occupies residues 1-24; the sequence is MVMGLGLFLLVFMLGLGLTPPTLA. The residue at position 25 (Gln-25) is a Pyrrolidone carboxylic acid. His-37 acts as the Proton acceptor in catalysis. Arg-45 lines the tRNA pocket. 3 disulfide bridges follow: Cys-50–Cys-105, Cys-63–Cys-116, and Cys-81–Cys-131. The short motif at 55 to 59 is the Nucleolar localization signal element; that stretch reads RRRGL. TRNA contacts are provided by Cys-105 and Ile-127. His-138 functions as the Proton donor in the catalytic mechanism.

It belongs to the pancreatic ribonuclease family. Homodimer. Interacts with RNH1; inhibiting ANG ribonuclease activity. Interacts with PCNA.

It is found in the secreted. Its subcellular location is the nucleus. The protein resides in the nucleolus. The protein localises to the cytoplasm. It localises to the stress granule. With respect to regulation, has weak tRNA ribonuclease activity by itself due to partial autoinhibition by its C-terminus, which folds into a short alpha-helix that partially occludes the substrate-binding site. In absence of stress, the ribonuclease activity is inhibited by RNH1 in the cytoplasm. In response to stress, dissociates from RNH1 in the cytoplasm and associates with cytoplasmic ribosomes with vacant A-sites: ribosomes directly activate the tRNA ribonuclease activity of ANG by refolding the C-terminal alpha-helix. In response to stress, the angiogenic activity of ANG is inhibited by RNH1 in the nucleus. Its function is as follows. Secreted ribonuclease that can either promote or restrict cell proliferation of target cells, depending on the context. Endocytosed in target cells via its receptor PLXNB2 and translocates to the cytoplasm or nucleus. Under stress conditions, localizes to the cytoplasm and promotes the assembly of stress granules (SGs): specifically cleaves a subset of tRNAs within anticodon loops to produce tRNA-derived stress-induced fragments (tiRNAs), resulting in translation repression and inhibition of cell proliferation. tiRNas also prevent formation of apoptosome, thereby promoting cell survival. Preferentially cleaves RNAs between a pyrimidine and an adenosine residue, suggesting that it cleaves the anticodon loop of tRNA(Ala) (32-UUAGCAU-38) after positions 33 and 36. Cleaves a subset of tRNAs, including tRNA(Ala), tRNA(Glu), tRNA(Gly), tRNA(Lys), tRNA(Val), tRNA(His), tRNA(Asp) and tRNA(Sec). Under growth conditions and in differentiated cells, translocates to the nucleus and stimulates ribosomal RNA (rRNA) transcription, including that containing the initiation site sequences of 45S rRNA, thereby promoting cell growth and proliferation. Angiogenin induces vascularization of normal and malignant tissues via its ability to promote rRNA transcription. Involved in hematopoietic stem and progenitor cell (HSPC) growth and survival by promoting rRNA transcription in growth conditions and inhibiting translation in response to stress, respectively. Mediates the crosstalk between myeloid and intestinal epithelial cells to protect the intestinal epithelial barrier integrity: secreted by myeloid cells and promotes intestinal epithelial cells proliferation and survival. Also mediates osteoclast-endothelial cell crosstalk in growing bone: produced by osteoclasts and protects the neighboring vascular cells against senescence by promoting rRNA transcription. The chain is Angiogenin (ANG) from Trachypithecus francoisi (Francois' leaf monkey).